The following is a 240-amino-acid chain: UDP-2,3-diacylglucosamine hydrolase (240 aa).

Mn(2+) is bound by residues D8, H10, D41, N79, and H114. A substrate-binding site is contributed by 79–80 (NR). Substrate contacts are provided by D122, S160, N164, K167, and H195. Positions 195 and 197 each coordinate Mn(2+).

It belongs to the LpxH family. Requires Mn(2+) as cofactor.

The protein localises to the cell inner membrane. The enzyme catalyses UDP-2-N,3-O-bis[(3R)-3-hydroxytetradecanoyl]-alpha-D-glucosamine + H2O = 2-N,3-O-bis[(3R)-3-hydroxytetradecanoyl]-alpha-D-glucosaminyl 1-phosphate + UMP + 2 H(+). It functions in the pathway glycolipid biosynthesis; lipid IV(A) biosynthesis; lipid IV(A) from (3R)-3-hydroxytetradecanoyl-[acyl-carrier-protein] and UDP-N-acetyl-alpha-D-glucosamine: step 4/6. Hydrolyzes the pyrophosphate bond of UDP-2,3-diacylglucosamine to yield 2,3-diacylglucosamine 1-phosphate (lipid X) and UMP by catalyzing the attack of water at the alpha-P atom. Involved in the biosynthesis of lipid A, a phosphorylated glycolipid that anchors the lipopolysaccharide to the outer membrane of the cell. The chain is UDP-2,3-diacylglucosamine hydrolase from Shigella boydii serotype 18 (strain CDC 3083-94 / BS512).